Consider the following 35-residue polypeptide: Cycloamanide F proprotein (35 aa).

Positions 1 to 10 are excised as a propeptide; the sequence is MSDINATRLP. The segment at residues 11 to 18 is a cross-link (cyclopeptide (Ile-Pro)); sequence IVGILGLP. Residues 19–35 constitute a propeptide that is removed on maturation; the sequence is CIGDDVNSTLTHGEDLC.

Belongs to the MSDIN fungal toxin family. In terms of processing, processed by the macrocyclase-peptidase enzyme POPB to yield a cyclic decapeptide. POPB first removes 10 residues from the N-terminus. Conformational trapping of the remaining peptide forces the enzyme to release this intermediate rather than proceed to macrocyclization. The enzyme rebinds the remaining peptide in a different conformation and catalyzes macrocyclization of the N-terminal 8 residues.

Its function is as follows. Cyclic octapeptide that belongs to the MSDIN-like toxin family responsible for a large number of food poisoning cases and deaths. Cycloaminide E is structurally related to other cycloamanides that are non-toxic to mammals but show immunosuppressive activity. The chain is Cycloamanide F proprotein from Amanita phalloides (Death cap).